Consider the following 382-residue polypeptide: MNLKEKTRALFAEIFGYPATHTIQAPGRVNLIGEHTDYNDGFVLPCAIDYQTVISCAPRDDRTVRVIAADYDNQVDEFSLDAPIVTHDSQQWSNYVRGVVKHLQQRNNAFGGVDMVISGNVPQGAGLSSSASLEVAVGTVFQQLYHLPLDGAQIALNGQEAENQFVGCNCGIMDQLISALGKKDHALLIDCRTLGAKAVSMPKGVAVVIINSNFKRTLVGSEYNTRREQCETGARFFQQPALRDVSLEAFNAVASELDPVVAKRVRHVLSENARTVEAASALEKGDLQRMGQLMAESHASMRDDFEITVPQIDTLVDIVKATIGDQGGVRMTGGGFGGCVVALIPEDLVPAVQQAVAQQYEAKTGIKETFYVCKPSQGAGQC.

34 to 37 is a binding site for substrate; sequence EHTD. 124–130 lines the ATP pocket; sequence GAGLSSS. Residues S130 and E162 each contribute to the Mg(2+) site. D174 acts as the Proton acceptor in catalysis. Y223 is a substrate binding site.

It belongs to the GHMP kinase family. GalK subfamily.

The protein localises to the cytoplasm. It carries out the reaction alpha-D-galactose + ATP = alpha-D-galactose 1-phosphate + ADP + H(+). It functions in the pathway carbohydrate metabolism; galactose metabolism. Its function is as follows. Catalyzes the transfer of the gamma-phosphate of ATP to D-galactose to form alpha-D-galactose-1-phosphate (Gal-1-P). This Salmonella typhi protein is Galactokinase.